Consider the following 164-residue polypeptide: Thiol peroxidase (164 aa).

The region spanning 18-163 (VSEGQHAPDF…FDAALEAYRN (146 aa)) is the Thioredoxin domain. The Cysteine sulfenic acid (-SOH) intermediate role is filled by Cys60. Cys60 and Cys93 are disulfide-bonded.

This sequence belongs to the peroxiredoxin family. Tpx subfamily. As to quaternary structure, homodimer.

It carries out the reaction a hydroperoxide + [thioredoxin]-dithiol = an alcohol + [thioredoxin]-disulfide + H2O. Thiol-specific peroxidase that catalyzes the reduction of hydrogen peroxide and organic hydroperoxides to water and alcohols, respectively. Plays a role in cell protection against oxidative stress by detoxifying peroxides. The protein is Thiol peroxidase of Staphylococcus haemolyticus (strain JCSC1435).